The chain runs to 396 residues: Proteinase-activated receptor 4 (396 aa).

Residues 1–16 (MCWPLLYPLVLGLSIS) form the signal peptide. Residues 17–59 (LAEGIQTPSIYDDVESTRGSHEGPLGPTVELKEPKSSDKPNPR) constitute a propeptide, removed for receptor activation. Residues 28–62 (DDVESTRGSHEGPLGPTVELKEPKSSDKPNPRGYP) form a disordered region. Positions 46–57 (ELKEPKSSDKPN) are enriched in basic and acidic residues. Topologically, residues 60–94 (GYPGKFCANDSDTLELPASSQALLLGWVPTRLVPA) are extracellular. Asparagine 68 carries an N-linked (GlcNAc...) asparagine glycan. A helical membrane pass occupies residues 95–115 (LYGLVVAVGLPANGLALWVLA). Residues 116–120 (TRVPR) are Cytoplasmic-facing. The helical transmembrane segment at 121 to 141 (LPSTILLMNLAVADLLLALVL) threads the bilayer. The Extracellular portion of the chain corresponds to 142–162 (PPRLAYHLRGQRWPFGEAACR). Cysteines 161 and 240 form a disulfide. A helical membrane pass occupies residues 163-183 (VATAALYGHMYGSVLLLAAVS). Topologically, residues 184 to 203 (LDRYLALVHPLRARALRGQR) are cytoplasmic. The chain crosses the membrane as a helical span at residues 204 to 224 (LTTGLCLVAWLSAATLALPLT). Residues 225–255 (LHRQTFRLAGSDRMLCHDALPLTEQTSHWRP) are Extracellular-facing. The helical transmembrane segment at 256-276 (AFICLAVLGCFVPLLAMGLCY) threads the bilayer. Over 277-295 (GATLRALAANGQRYSHALR) the chain is Cytoplasmic. The chain crosses the membrane as a helical span at residues 296–316 (LTALVLFSAVASFTPSNVLLV). The Extracellular portion of the chain corresponds to 317-331 (LHYSNPSPEAWGNLY). The helical transmembrane segment at 332–355 (GAYVPSLALSTLNSCVDPFIYYYV) threads the bilayer. The Cytoplasmic portion of the chain corresponds to 356–396 (SHEFREKVRAMLCRQPEASSSSQASREAGSRGTAICSSTLL).

Belongs to the G-protein coupled receptor 1 family. In terms of processing, a proteolytic cleavage generates a new N-terminus that functions as a tethered ligand. As to expression, highly expressed in the spleen. Slight expression in the heart, lung, skeletal muscle and kidney. No detectable expression in brain, liver or testis. Also detected in platelets.

The protein localises to the cell membrane. Its function is as follows. Receptor for activated thrombin or trypsin coupled to G proteins that stimulate phosphoinositide hydrolysis. May play a role in platelets activation. This is Proteinase-activated receptor 4 (F2rl3) from Mus musculus (Mouse).